A 172-amino-acid chain; its full sequence is Protein sym-1 (172 aa).

The next 5 membrane-spanning stretches (helical) occupy residues 13–33 (PLLT…VAAQ), 52–72 (MVLY…RFLQ), 94–114 (GLFA…LEGT), 128–148 (LSTN…VVPL), and 152–172 (VLFV…LNGQ).

It belongs to the peroxisomal membrane protein PXMP2/4 family.

It is found in the mitochondrion inner membrane. May be involved in cellular response to stress. Required to maintain mitochondrial DNA (mtDNA) integrity and stability. The polypeptide is Protein sym-1 (sym-1) (Neurospora crassa (strain ATCC 24698 / 74-OR23-1A / CBS 708.71 / DSM 1257 / FGSC 987)).